The chain runs to 505 residues: Deoxyguanosinetriphosphate triphosphohydrolase (505 aa).

One can recognise an HD domain in the interval Arg66–Cys273.

Belongs to the dGTPase family. Type 1 subfamily. Homotetramer. The cofactor is Mg(2+).

The catalysed reaction is dGTP + H2O = 2'-deoxyguanosine + triphosphate + H(+). Functionally, dGTPase preferentially hydrolyzes dGTP over the other canonical NTPs. This Shigella boydii serotype 4 (strain Sb227) protein is Deoxyguanosinetriphosphate triphosphohydrolase.